We begin with the raw amino-acid sequence, 471 residues long: 4-aminobutyrate aminotransferase (471 aa).

A pyridoxal 5'-phosphate-binding site is contributed by 135–136 (GA). Arg192 contributes to the substrate binding site. Lys326 is modified (N6-(pyridoxal phosphate)lysine). Thr351 is a binding site for pyridoxal 5'-phosphate.

The protein belongs to the class-III pyridoxal-phosphate-dependent aminotransferase family. Homodimer and homotetramer. It depends on pyridoxal 5'-phosphate as a cofactor.

It is found in the cytoplasm. The catalysed reaction is 4-aminobutanoate + 2-oxoglutarate = succinate semialdehyde + L-glutamate. In terms of biological role, required for the degradation of gamma-aminobutyric acid (GABA), which is important for utilization of GABA as nitrogen source and for oxidative stress tolerance. Deaminates GABA to succinate semialdehyde, which in turn is converted to succinate by the succinate-semialdehyde dehydrogenase UGA2. Cannot transaminate beta-alanine (BAL). The protein is 4-aminobutyrate aminotransferase (UGA1) of Saccharomyces cerevisiae (strain ATCC 204508 / S288c) (Baker's yeast).